The following is a 249-amino-acid chain: Probable transcriptional regulatory protein Minf_0651 (249 aa).

The protein belongs to the TACO1 family.

It is found in the cytoplasm. This is Probable transcriptional regulatory protein Minf_0651 from Methylacidiphilum infernorum (isolate V4) (Methylokorus infernorum (strain V4)).